Reading from the N-terminus, the 336-residue chain is C2H2 finger domain transcription factor mtfA (336 aa).

Residues Met1–Ser245 form a disordered region. Composition is skewed to polar residues over residues Ile7 to Ser29 and Glu36 to Thr56. The segment covering Ser136–Ala149 has biased composition (low complexity). Positions Thr168–His181 are enriched in polar residues. Positions Ala182–Ala210 are enriched in low complexity. Polar residues predominate over residues Pro216 to Ser245. 2 consecutive C2H2-type zinc fingers follow at residues Tyr272–His294 and Phe300–His325.

It localises to the nucleus. In terms of biological role, transcription factor that controls morphogenesis and virulence. Acts as a positive regulator of gliotixin and protease production. The chain is C2H2 finger domain transcription factor mtfA from Aspergillus fumigatus (strain CBS 144.89 / FGSC A1163 / CEA10) (Neosartorya fumigata).